The following is a 104-amino-acid chain: Putative heat shock protein PS1 (104 aa).

2 N-linked (GlcNAc...) asparagine glycosylation sites follow: N11 and N18. An ATP-binding site is contributed by N18.

Belongs to the heat shock protein 90 family. As to quaternary structure, homodimer.

It localises to the cytoplasm. In terms of biological role, putative molecular chaperone that may promote the maturation, structural maintenance and proper regulation of specific target proteins. The protein is Putative heat shock protein PS1 of Pinus strobus (Eastern white pine).